The sequence spans 213 residues: dITP/XTP pyrophosphatase (213 aa).

Residue 17 to 22 (SNNAGK) participates in substrate binding. Positions 49 and 78 each coordinate Mg(2+). Catalysis depends on Asp78, which acts as the Proton acceptor. Substrate contacts are provided by residues Ser79, 164–167 (FGYD), Lys187, and 192–193 (HR).

This sequence belongs to the HAM1 NTPase family. As to quaternary structure, homodimer. The cofactor is Mg(2+).

The enzyme catalyses XTP + H2O = XMP + diphosphate + H(+). It carries out the reaction dITP + H2O = dIMP + diphosphate + H(+). The catalysed reaction is ITP + H2O = IMP + diphosphate + H(+). Functionally, pyrophosphatase that catalyzes the hydrolysis of nucleoside triphosphates to their monophosphate derivatives, with a high preference for the non-canonical purine nucleotides XTP (xanthosine triphosphate), dITP (deoxyinosine triphosphate) and ITP. Seems to function as a house-cleaning enzyme that removes non-canonical purine nucleotides from the nucleotide pool, thus preventing their incorporation into DNA/RNA and avoiding chromosomal lesions. This Bordetella bronchiseptica (strain ATCC BAA-588 / NCTC 13252 / RB50) (Alcaligenes bronchisepticus) protein is dITP/XTP pyrophosphatase.